A 194-amino-acid polypeptide reads, in one-letter code: HTH-type transcriptional regulator BetI (194 aa).

The HTH tetR-type domain occupies 8 to 68 (EIRRAQLIDA…ATMRHVLRDL (61 aa)). A DNA-binding region (H-T-H motif) is located at residues 31–50 (TLASVAQRANISTGIVSHYF).

It participates in amine and polyamine biosynthesis; betaine biosynthesis via choline pathway [regulation]. Functionally, repressor involved in the biosynthesis of the osmoprotectant glycine betaine. It represses transcription of the choline transporter BetT and the genes of BetAB involved in the synthesis of glycine betaine. This is HTH-type transcriptional regulator BetI from Burkholderia cenocepacia (strain HI2424).